The primary structure comprises 5596 residues: Midasin (5596 aa).

Methionine 1 bears the N-acetylmethionine mark. AAA-ATPase protomer stretches follow at residues serine 307 to leucine 591, leucine 659 to proline 978, lysine 1048 to isoleucine 1316, and histidine 1362 to glycine 1616. ATP is bound at residue glycine 329–threonine 336. Positions serine 517–arginine 537 are disordered. ATP-binding positions include glycine 677–threonine 684 and glycine 1084–threonine 1091. The residue at position 1177 (threonine 1177) is a Phosphothreonine. Glycine 1390 to threonine 1397 contacts ATP. Lysine 1683 carries the post-translational modification N6-acetyllysine. 2 AAA-ATPase protomer regions span residues arginine 1738–lysine 1995 and methionine 2053–serine 2313. Residues glycine 1753–threonine 1760 and glycine 2066–threonine 2073 each bind ATP. Residue serine 1754 is modified to Phosphoserine. A linker region spans residues serine 2418–aspartate 4691. Positions leucine 3989–alanine 4008 are disordered. Phosphothreonine is present on threonine 4212. Serine 4538 carries the phosphoserine modification. Disordered stretches follow at residues alanine 4669–aspartate 4688 and glutamate 4700–serine 5260. The segment covering threonine 4702 to aspartate 4724 has biased composition (basic and acidic residues). Residues glutamate 4741 to glycine 4757 show a composition bias toward acidic residues. Phosphoserine occurs at positions 4752 and 4754. Basic and acidic residues predominate over residues aspartate 4758–glycine 4780. A compositionally biased stretch (acidic residues) spans aspartate 4781–lysine 4794. The span at asparagine 4822–lysine 4834 shows a compositional bias: basic and acidic residues. Acidic residues predominate over residues glutamate 4835 to glutamine 4844. The span at glycine 4845 to glutamate 4855 shows a compositional bias: basic and acidic residues. Residues glutamate 4877–aspartate 4888 are compositionally biased toward acidic residues. Residue serine 4889 is modified to Phosphoserine. Positions glutamate 4896–proline 4908 are enriched in acidic residues. Threonine 4898 bears the Phosphothreonine mark. The span at leucine 4909–threonine 4928 shows a compositional bias: basic and acidic residues. Residues serine 4937 and serine 4946 each carry the phosphoserine modification. Residues glutamate 4940 to glycine 4966 are compositionally biased toward acidic residues. The segment covering alanine 4968 to glutamate 4989 has biased composition (basic and acidic residues). The span at glutamine 5007 to valine 5021 shows a compositional bias: acidic residues. Serine 5015 bears the Phosphoserine mark. The segment covering cysteine 5033 to alanine 5046 has biased composition (polar residues). Residues proline 5054–glycine 5064 are compositionally biased toward basic and acidic residues. Positions lysine 5088–proline 5101 are enriched in basic residues. A compositionally biased stretch (basic and acidic residues) spans aspartate 5105 to glutamate 5115. A compositionally biased stretch (low complexity) spans glutamine 5132–glutamine 5141. Acidic residues predominate over residues glutamine 5181–glutamate 5197. Composition is skewed to basic and acidic residues over residues glutamate 5198–lysine 5213 and lysine 5233–serine 5260. The 200-residue stretch at glutamine 5384–leucine 5583 folds into the VWFA domain.

The protein belongs to the midasin family. As to quaternary structure, associates with pre-60S ribosomes in the nucleoplasm. Interacts (via its hexameric AAA ATPase ring) with the PELP1 complex (via PELP1); the interaction is regulated by SUMO conjugation of PELP1 and is crucial for recruitment of MDN1 to the pre-ribosomal particle. Interacts (via VWFA/MIDAS domain) with WDR12 (via UBL domain). Interacts (via VWFA/MIDAS domain) with NLE1 (via UBL domain).

It localises to the nucleus. The protein resides in the nucleolus. Its subcellular location is the nucleoplasm. The protein localises to the cytoplasm. Nuclear chaperone required for maturation and nuclear export of pre-60S ribosome subunits. Functions at successive maturation steps to remove ribosomal factors at critical transition points, first driving the exit of early pre-60S particles from the nucleolus and then driving late pre-60S particles from the nucleus. At an early stage in 60S maturation, mediates the dissociation of the PeBoW complex (PES1-BOP1-WDR12) from early pre-60S particles, rendering them competent for export from the nucleolus to the nucleoplasm. Subsequently recruited to the nucleoplasmic particles through interaction with SUMO-conjugated PELP1 complex. This binding is only possible if the 5S RNP at the central protuberance has undergone the rotation to complete its maturation. This chain is Midasin (MDN1), found in Homo sapiens (Human).